The sequence spans 41 residues: Mu-conotoxin pn4c (41 aa).

Positions 1–24 are excised as a propeptide; the sequence is DQPAERMQDDISSEHHPFFDPVKR.

The protein belongs to the conotoxin M superfamily. In terms of processing, contains 3 disulfide bonds. They are not added, since framework IV presents two different connectivities (I-V, II-III, IV-VI and I-III, II-V, IV-VI). In terms of tissue distribution, expressed by the venom duct.

It localises to the secreted. Its function is as follows. Mu-conotoxins block voltage-gated sodium channels (Nav). Blocks reversibly sodium channels in molluskan neurons, but has no effect on sodium currents in bovine chromaffin cells or in rat brain synaptosomes. Induces paralysis in mollusks (C.retripictus). This Conus pennaceus (Feathered cone) protein is Mu-conotoxin pn4c.